The primary structure comprises 885 residues: Translation initiation factor IF-2 (885 aa).

The segment covering 123 to 232 (ETEAKAKAEA…EAERYSDHHI (110 aa)) has biased composition (basic and acidic residues). Residues 123-289 (ETEAKAKAEA…RNRSTAPESM (167 aa)) are disordered. Basic residues predominate over residues 253 to 266 (GRRARNKNTAKTKR). The segment covering 267 to 276 (GGKDARDGRE) has biased composition (basic and acidic residues). The tr-type G domain maps to 385-554 (PRAPVVTIMG…LLQAEVLELK (170 aa)). Residues 394–401 (GHVDHGKT) are G1. 394–401 (GHVDHGKT) lines the GTP pocket. Residues 419 to 423 (GITQH) form a G2 region. The G3 stretch occupies residues 440–443 (DTPG). GTP contacts are provided by residues 440 to 444 (DTPGH) and 494 to 497 (NKMD). A G4 region spans residues 494–497 (NKMD). Positions 530-532 (SAK) are G5.

It belongs to the TRAFAC class translation factor GTPase superfamily. Classic translation factor GTPase family. IF-2 subfamily.

It is found in the cytoplasm. One of the essential components for the initiation of protein synthesis. Protects formylmethionyl-tRNA from spontaneous hydrolysis and promotes its binding to the 30S ribosomal subunits. Also involved in the hydrolysis of GTP during the formation of the 70S ribosomal complex. In Shewanella oneidensis (strain ATCC 700550 / JCM 31522 / CIP 106686 / LMG 19005 / NCIMB 14063 / MR-1), this protein is Translation initiation factor IF-2.